A 113-amino-acid polypeptide reads, in one-letter code: MSSIFINKGVEMMESEKSGGMDRYVTFERIDCFKNAHEVVSNALRVLEANPEMKNPFWEKFCSKIPDSFYSYTPQEDLLYLVCANVFYLEELFDEAEDEEGQAIMSRCEFECC.

This sequence belongs to the CowN family.

In terms of biological role, is required to sustain N(2)-dependent growth in the presence of low levels of carbon monoxide (CO). Probably acts by protecting the N(2) fixation ability of the nitrogenase complex, which is inactivated in the presence of CO. The sequence is that of N(2)-fixation sustaining protein CowN from Wolinella succinogenes (strain ATCC 29543 / DSM 1740 / CCUG 13145 / JCM 31913 / LMG 7466 / NCTC 11488 / FDC 602W) (Vibrio succinogenes).